A 290-amino-acid polypeptide reads, in one-letter code: Shikimate dehydrogenase (NADP(+)) (290 aa).

Shikimate is bound by residues 20–22 (SLS) and Thr-67. The active-site Proton acceptor is Lys-71. The shikimate site is built by Asn-92 and Asp-107. Residues 130–134 (GAGGA) and Leu-227 each bind NADP(+). Tyr-229 contacts shikimate. Gly-250 contacts NADP(+).

Belongs to the shikimate dehydrogenase family. Homodimer.

It carries out the reaction shikimate + NADP(+) = 3-dehydroshikimate + NADPH + H(+). The protein operates within metabolic intermediate biosynthesis; chorismate biosynthesis; chorismate from D-erythrose 4-phosphate and phosphoenolpyruvate: step 4/7. Its function is as follows. Involved in the biosynthesis of the chorismate, which leads to the biosynthesis of aromatic amino acids. Catalyzes the reversible NADPH linked reduction of 3-dehydroshikimate (DHSA) to yield shikimate (SA). The sequence is that of Shikimate dehydrogenase (NADP(+)) from Syntrophomonas wolfei subsp. wolfei (strain DSM 2245B / Goettingen).